The primary structure comprises 122 residues: Small ribosomal subunit protein uS13 (122 aa).

A compositionally biased stretch (basic residues) spans 95-116 (GLPVRGQKTKTNARTRKGRRKT). Positions 95–122 (GLPVRGQKTKTNARTRKGRRKTVGAATK) are disordered.

Belongs to the universal ribosomal protein uS13 family. In terms of assembly, part of the 30S ribosomal subunit. Forms a loose heterodimer with protein S19. Forms two bridges to the 50S subunit in the 70S ribosome.

Located at the top of the head of the 30S subunit, it contacts several helices of the 16S rRNA. In the 70S ribosome it contacts the 23S rRNA (bridge B1a) and protein L5 of the 50S subunit (bridge B1b), connecting the 2 subunits; these bridges are implicated in subunit movement. Contacts the tRNAs in the A and P-sites. In Campylobacter concisus (strain 13826), this protein is Small ribosomal subunit protein uS13.